The following is a 556-amino-acid chain: MKSDIEIAQEAKLEPIVKIAEKLGLTEDDIELYGKYKAKIAAHVWDRIKDRPDGKLILVTAINPTPAGEGKTTTTVGLGDALSRLGKKTVIALREPSLGPSFGVKGGAAGGGYAQVVPMEDINLHFTGDLHAITTAHNLLAAMIDNHIHQGNELGIDPRRVVWRRVVDLNDRALRKVVIGLGGPAQGVPRETGFDITVASEIMAILCLASDLMDLKERFNRILIGYTYDQKPVYARDLKAAGAMTVLMKDAIKPNLVQTLEHTPAFVHGGPFANIAHGTNSILADKIALKLADYLVTEAGFGADLGAEKFFNVVCRFAGFKPSAVVIVATVRALKYNGGVPRAELNKENLEALEKGFANLEKHIENIGKFGLPAVVAINRFPTDTDAELNKLRELIEATGAEFALSEVWAKGGEGGIELAQKVLKVIEEKPANFRYLYDLEMPIKQKIETIAREIYGADGVVFTADAEKTLAKFEEMGFGNMPVIMAKTQYSLSDDPNKLGRPTGFNITVRELRASVGAGFIVAITGDIMTMPGLPKRPAAEVIDIDADGKITGLF.

65 to 72 (TPAGEGKT) contacts ATP.

The protein belongs to the formate--tetrahydrofolate ligase family.

It carries out the reaction (6S)-5,6,7,8-tetrahydrofolate + formate + ATP = (6R)-10-formyltetrahydrofolate + ADP + phosphate. Its pathway is one-carbon metabolism; tetrahydrofolate interconversion. This chain is Formate--tetrahydrofolate ligase, found in Carboxydothermus hydrogenoformans (strain ATCC BAA-161 / DSM 6008 / Z-2901).